We begin with the raw amino-acid sequence, 729 residues long: DNA topoisomerase 3 (729 aa).

A Toprim domain is found at 3-136; it reads KSVVIAEKPS…IKRLWISSVT (134 aa). Mg(2+) contacts are provided by Glu-9 and Asp-105. The Topo IA-type catalytic domain maps to 153–594; it reads YDNLYASAVA…EMKNYTKEIV (442 aa). The interval 187–192 is interaction with DNA; it reads NCGRVQ. The active-site O-(5'-phospho-DNA)-tyrosine intermediate is the Tyr-310. The span at 686-713 shows a compositional bias: basic and acidic residues; the sequence is ERRKKESGNKADKRDVQKYMKQQKKEEE. Positions 686–718 are disordered; sequence ERRKKESGNKADKRDVQKYMKQQKKEEEPLNNP.

It belongs to the type IA topoisomerase family. Requires Mg(2+) as cofactor.

It catalyses the reaction ATP-independent breakage of single-stranded DNA, followed by passage and rejoining.. Its function is as follows. Releases the supercoiling and torsional tension of DNA, which is introduced during the DNA replication and transcription, by transiently cleaving and rejoining one strand of the DNA duplex. Introduces a single-strand break via transesterification at a target site in duplex DNA. The scissile phosphodiester is attacked by the catalytic tyrosine of the enzyme, resulting in the formation of a DNA-(5'-phosphotyrosyl)-enzyme intermediate and the expulsion of a 3'-OH DNA strand. The free DNA strand then undergoes passage around the unbroken strand, thus removing DNA supercoils. Finally, in the religation step, the DNA 3'-OH attacks the covalent intermediate to expel the active-site tyrosine and restore the DNA phosphodiester backbone. This Bacillus thuringiensis subsp. konkukian (strain 97-27) protein is DNA topoisomerase 3.